We begin with the raw amino-acid sequence, 149 residues long: Transcriptional repressor NrdR (149 aa).

The segment at 3–34 is a zinc-finger region; the sequence is CPFCGNRDTNVRDSRSVNEGTFIKRRRFCGEC. Residues 49–139 enclose the ATP-cone domain; the sequence is IKVIKKNGSC…VYMNFENEKD (91 aa).

It belongs to the NrdR family. Requires Zn(2+) as cofactor.

Functionally, negatively regulates transcription of bacterial ribonucleotide reductase nrd genes and operons by binding to NrdR-boxes. In Neorickettsia sennetsu (strain ATCC VR-367 / Miyayama) (Ehrlichia sennetsu), this protein is Transcriptional repressor NrdR.